A 21-amino-acid chain; its full sequence is Japonicin-2 (21 aa).

Cys-14 and Cys-21 form a disulfide bridge.

As to expression, expressed by the skin glands.

It is found in the secreted. Functionally, antibacterial activity against the Gram-negative bacterium E.coli and the Gram-positive bacterium S.aureus. The polypeptide is Japonicin-2 (Rana japonica (Japanese reddish frog)).